The chain runs to 473 residues: Trigger factor (473 aa).

The PPIase FKBP-type domain maps to 162–243 (GDFVSIDLSA…VKSIKVRELP (82 aa)). The disordered stretch occupies residues 433–473 (TAEFFGPSGEQAEAEQDEAAPAEDATEETDADSDEAADDSK). The span at 444 to 473 (AEAEQDEAAPAEDATEETDADSDEAADDSK) shows a compositional bias: acidic residues.

The protein belongs to the FKBP-type PPIase family. Tig subfamily.

Its subcellular location is the cytoplasm. The catalysed reaction is [protein]-peptidylproline (omega=180) = [protein]-peptidylproline (omega=0). In terms of biological role, involved in protein export. Acts as a chaperone by maintaining the newly synthesized protein in an open conformation. Functions as a peptidyl-prolyl cis-trans isomerase. The protein is Trigger factor of Mycolicibacterium vanbaalenii (strain DSM 7251 / JCM 13017 / BCRC 16820 / KCTC 9966 / NRRL B-24157 / PYR-1) (Mycobacterium vanbaalenii).